Consider the following 432-residue polypeptide: Ribosomal protein uS12 methylthiotransferase RimO (432 aa).

Residues 2 to 115 enclose the MTTase N-terminal domain; that stretch reads IRVAVITLGC…LPEIINRVLK (114 aa). The [4Fe-4S] cluster site is built by Cys11, Cys47, Cys78, Cys151, Cys155, and Cys158. The Radical SAM core domain occupies 137–367; it reads EDGKPFAYLK…MLHQQSITRA (231 aa).

The protein belongs to the methylthiotransferase family. RimO subfamily. [4Fe-4S] cluster serves as cofactor.

It is found in the cytoplasm. It catalyses the reaction L-aspartate(89)-[ribosomal protein uS12]-hydrogen + (sulfur carrier)-SH + AH2 + 2 S-adenosyl-L-methionine = 3-methylsulfanyl-L-aspartate(89)-[ribosomal protein uS12]-hydrogen + (sulfur carrier)-H + 5'-deoxyadenosine + L-methionine + A + S-adenosyl-L-homocysteine + 2 H(+). Catalyzes the methylthiolation of an aspartic acid residue of ribosomal protein uS12. This chain is Ribosomal protein uS12 methylthiotransferase RimO, found in Moorella thermoacetica (strain ATCC 39073 / JCM 9320).